The primary structure comprises 535 residues: Ribonuclease Y (535 aa).

The helical transmembrane segment at 4–24 threads the bilayer; the sequence is IILAMVCALIGLIIGYVAISM. Positions 107-145 are disordered; that stretch reads TDRASSLDRKDENLSNKEKMLDSKEQSLTDKSRHINERE. One can recognise a KH domain in the interval 225–285; it reads TITTVHLPDD…IRREIARMTL (61 aa). The HD domain occupies 351–444; it reads VLRHSVEVGK…VAAADALSSA (94 aa).

The protein belongs to the RNase Y family.

The protein localises to the cell membrane. Its function is as follows. Endoribonuclease that initiates mRNA decay. The sequence is that of Ribonuclease Y from Streptococcus agalactiae serotype Ia (strain ATCC 27591 / A909 / CDC SS700).